A 296-amino-acid chain; its full sequence is Probable AP endonuclease (296 aa).

An intrachain disulfide couples Cys-16 to Cys-20. His-78, His-115, Glu-142, His-182, His-218, Asp-231, His-233, and Glu-271 together coordinate Zn(2+).

Belongs to the AP endonuclease 2 family. The cofactor is Zn(2+).

Its subcellular location is the host nucleus. It is found in the host cytoplasm. It localises to the virion. Its function is as follows. Endonuclease of the viral base excision repair system that catalyzes DNA cleavage reaction at the apurinic or apyrimidinic sites (AP sites). Cleaves phosphodiester bonds on the 5' side of AP sites. In addition to endonuclease activity, the AP endonuclease has a proofreading 3'-5' exonuclease activity that is considerably more efficient in the elimination of a mismatch than in that of a correctly paired base. Displays 3'-phosphatase and 3'-repair diesterase activities. The single nucleotide gaps generated by the AP endonuclease are filled by the viral repair DNA polymerase X and the DNA ligase. The polypeptide is Probable AP endonuclease (Ornithodoros (relapsing fever ticks)).